We begin with the raw amino-acid sequence, 598 residues long: Elongation factor 4 (598 aa).

The tr-type G domain maps to 4–186; it reads SHIRNFSIIA…VIVNKIPPPE (183 aa). GTP is bound by residues 16–21 and 133–136; these read DHGKST and NKID.

Belongs to the TRAFAC class translation factor GTPase superfamily. Classic translation factor GTPase family. LepA subfamily.

The protein resides in the cell inner membrane. It carries out the reaction GTP + H2O = GDP + phosphate + H(+). Functionally, required for accurate and efficient protein synthesis under certain stress conditions. May act as a fidelity factor of the translation reaction, by catalyzing a one-codon backward translocation of tRNAs on improperly translocated ribosomes. Back-translocation proceeds from a post-translocation (POST) complex to a pre-translocation (PRE) complex, thus giving elongation factor G a second chance to translocate the tRNAs correctly. Binds to ribosomes in a GTP-dependent manner. The polypeptide is Elongation factor 4 (Alteromonas mediterranea (strain DSM 17117 / CIP 110805 / LMG 28347 / Deep ecotype)).